We begin with the raw amino-acid sequence, 96 residues long: Secretoglobin family 2B member 2 (96 aa).

Positions 1–23 (MRVTSATCALLLALICSVQLGDA) are cleaved as a signal peptide.

This sequence belongs to the secretoglobin family.

Its subcellular location is the secreted. This Homo sapiens (Human) protein is Secretoglobin family 2B member 2 (SCGB2B2).